The sequence spans 306 residues: Peroxisomal protein PEX21 (306 aa).

Cysteine 4 is covalently cross-linked (Glycyl cysteine thioester (Cys-Gly) (interchain with G-Cter in ubiquitin)). The tract at residues 172 to 203 (ERQVQDDEKEQQQDKDDDFHLKETSPLDEDQR) is disordered.

It belongs to the peroxin-21 family. As to quaternary structure, interacts with PEX7. Monoubiquitinated at Cys-4; acts as a signal for PEX21 extraction and is required for proper export from peroxisomes and recycling.

Its subcellular location is the cytoplasm. The protein localises to the cytosol. The protein resides in the peroxisome. Mediates peroxisomal import of proteins containing a C-terminal PTS2-type peroxisomal targeting signal via its interaction with PEX7. Interaction with PEX7 only takes place when PEX7 is associated with cargo proteins containing a PTS2 peroxisomal targeting signal. PEX7 along with PTS2-containing cargo proteins are then translocated through the PEX13-PEX14 docking complex together with PEX21. The protein is Peroxisomal protein PEX21 (PEX21) of Kluyveromyces lactis (strain ATCC 8585 / CBS 2359 / DSM 70799 / NBRC 1267 / NRRL Y-1140 / WM37) (Yeast).